A 304-amino-acid polypeptide reads, in one-letter code: Dipeptide transport system permease protein DppC (304 aa).

Residues 1–24 (MKTEHAKPLMTPEPNSPPPEDQYT) are disordered. 6 helical membrane passes run 41 to 61 (LAIV…FAPL), 108 to 128 (VGFF…LIAG), 141 to 161 (IFDI…VAIL), 164 to 184 (SLQN…GRLV), 227 to 247 (ATLG…LGLG), and 271 to 291 (WTVL…NMIG). One can recognise an ABC transmembrane type-1 domain in the interval 102-291 (ARLSLQVGFF…LVVLGFNMIG (190 aa)).

The protein belongs to the binding-protein-dependent transport system permease family. OppBC subfamily.

Its subcellular location is the cell membrane. Functionally, probably part of the ABC transporter Dpp involved in dipeptide transport. Responsible for the translocation of the substrate across the membrane. This Alkalihalophilus pseudofirmus (strain ATCC BAA-2126 / JCM 17055 / OF4) (Bacillus pseudofirmus) protein is Dipeptide transport system permease protein DppC (dppC).